The primary structure comprises 357 residues: Probable cinnamyl alcohol dehydrogenase 2 (357 aa).

Cys-47 lines the Zn(2+) pocket. Ser-49 contacts NADP(+). Zn(2+) is bound by residues His-69, Glu-70, Cys-100, Cys-103, Cys-106, Cys-114, and Cys-163. NADP(+) is bound by residues Thr-167, 188–193 (GLGGVG), 211–216 (SSSDKK), Thr-251, Gly-275, and 298–300 (SFI).

This sequence belongs to the zinc-containing alcohol dehydrogenase family. Homodimer. Zn(2+) serves as cofactor.

It carries out the reaction (E)-cinnamyl alcohol + NADP(+) = (E)-cinnamaldehyde + NADPH + H(+). The enzyme catalyses (E)-coniferol + NADP(+) = (E)-coniferaldehyde + NADPH + H(+). It catalyses the reaction (E)-sinapyl alcohol + NADP(+) = (E)-sinapaldehyde + NADPH + H(+). The catalysed reaction is (E)-4-coumaroyl alcohol + NADP(+) = (E)-4-coumaraldehyde + NADPH + H(+). It carries out the reaction (E)-caffeyl alcohol + NADP(+) = (E)-caffeyl aldehyde + NADPH + H(+). It participates in aromatic compound metabolism; phenylpropanoid biosynthesis. Its function is as follows. Involved in lignin biosynthesis. Catalyzes the final step specific for the production of lignin monomers. Catalyzes the NADPH-dependent reduction of coniferaldehyde, 5-hydroxyconiferaldehyde, sinapaldehyde, 4-coumaraldehyde and caffeyl aldehyde to their respective alcohols. This Picea abies (Norway spruce) protein is Probable cinnamyl alcohol dehydrogenase 2 (CAD2).